The chain runs to 156 residues: Small ribosomal subunit protein uS7 (156 aa).

Belongs to the universal ribosomal protein uS7 family. Part of the 30S ribosomal subunit. Contacts proteins S9 and S11.

One of the primary rRNA binding proteins, it binds directly to 16S rRNA where it nucleates assembly of the head domain of the 30S subunit. Is located at the subunit interface close to the decoding center, probably blocks exit of the E-site tRNA. The sequence is that of Small ribosomal subunit protein uS7 from Leifsonia xyli subsp. xyli (strain CTCB07).